Here is a 269-residue protein sequence, read N- to C-terminus: Formamidopyrimidine-DNA glycosylase (269 aa).

P2 functions as the Schiff-base intermediate with DNA in the catalytic mechanism. Catalysis depends on E3, which acts as the Proton donor. K58 functions as the Proton donor; for beta-elimination activity in the catalytic mechanism. H91, R110, and K150 together coordinate DNA. The FPG-type zinc finger occupies 235–269; the sequence is SVYGCKNKKCYRCKGIIIKFVQNQRSTFYCKKCQT. R259 functions as the Proton donor; for delta-elimination activity in the catalytic mechanism.

It belongs to the FPG family. As to quaternary structure, monomer. The cofactor is Zn(2+).

It catalyses the reaction Hydrolysis of DNA containing ring-opened 7-methylguanine residues, releasing 2,6-diamino-4-hydroxy-5-(N-methyl)formamidopyrimidine.. It carries out the reaction 2'-deoxyribonucleotide-(2'-deoxyribose 5'-phosphate)-2'-deoxyribonucleotide-DNA = a 3'-end 2'-deoxyribonucleotide-(2,3-dehydro-2,3-deoxyribose 5'-phosphate)-DNA + a 5'-end 5'-phospho-2'-deoxyribonucleoside-DNA + H(+). Its function is as follows. Involved in base excision repair of DNA damaged by oxidation or by mutagenic agents. Acts as a DNA glycosylase that recognizes and removes damaged bases. Has a preference for oxidized purines, such as 7,8-dihydro-8-oxoguanine (8-oxoG). Has AP (apurinic/apyrimidinic) lyase activity and introduces nicks in the DNA strand. Cleaves the DNA backbone by beta-delta elimination to generate a single-strand break at the site of the removed base with both 3'- and 5'-phosphates. The chain is Formamidopyrimidine-DNA glycosylase from Vesicomyosocius okutanii subsp. Calyptogena okutanii (strain HA).